Here is a 267-residue protein sequence, read N- to C-terminus: Putative ABC transporter permease protein MJ0413 (267 aa).

7 helical membrane-spanning segments follow: residues 18–38, 48–68, 78–98, 115–135, 136–156, 188–208, and 228–248; these read VLKISLPALAVVIWELLAIYI, EAVINVLIHPFQGILGTGSLI, VISGFLLASAVAIPLGILMGY, PIPPLAWVPLSLAWFGLGEMS, MIFIIFIGAFFPILINTISGV, PSILTGLRVGAGIAWMCVVAA, and LSRMDVVIACMIIIGLIGLVL. In terms of domain architecture, ABC transmembrane type-1 spans 71–252; that stretch reads TIISIKRVIS…LIGLVLDRGL (182 aa).

It belongs to the binding-protein-dependent transport system permease family. CysTW subfamily.

It is found in the cell membrane. In terms of biological role, probably part of a binding-protein-dependent transport system. Probably responsible for the translocation of the substrate across the membrane. The polypeptide is Putative ABC transporter permease protein MJ0413 (Methanocaldococcus jannaschii (strain ATCC 43067 / DSM 2661 / JAL-1 / JCM 10045 / NBRC 100440) (Methanococcus jannaschii)).